The sequence spans 350 residues: UDP-3-O-acylglucosamine N-acyltransferase (350 aa).

Catalysis depends on His244, which acts as the Proton acceptor.

The protein belongs to the transferase hexapeptide repeat family. LpxD subfamily. Homotrimer.

The enzyme catalyses a UDP-3-O-[(3R)-3-hydroxyacyl]-alpha-D-glucosamine + a (3R)-hydroxyacyl-[ACP] = a UDP-2-N,3-O-bis[(3R)-3-hydroxyacyl]-alpha-D-glucosamine + holo-[ACP] + H(+). Its pathway is bacterial outer membrane biogenesis; LPS lipid A biosynthesis. In terms of biological role, catalyzes the N-acylation of UDP-3-O-acylglucosamine using 3-hydroxyacyl-ACP as the acyl donor. Is involved in the biosynthesis of lipid A, a phosphorylated glycolipid that anchors the lipopolysaccharide to the outer membrane of the cell. The sequence is that of UDP-3-O-acylglucosamine N-acyltransferase from Janthinobacterium sp. (strain Marseille) (Minibacterium massiliensis).